The chain runs to 288 residues: Protease HtpX (288 aa).

The next 2 membrane-spanning stretches (helical) occupy residues 5-25 (IALFLATNLAVLILASIVMSL) and 34-54 (SGLLVMAGIFGFGGSFISLLL). A Zn(2+)-binding site is contributed by histidine 140. The active site involves glutamate 141. Histidine 144 contacts Zn(2+). The next 2 helical transmembrane spans lie at 155–175 (LLQGVLNTFVIVLARVVGGII) and 190–210 (FAYFIIVFVLEMVFGLFATMI). Glutamate 219 provides a ligand contact to Zn(2+).

This sequence belongs to the peptidase M48B family. Zn(2+) is required as a cofactor.

It is found in the cell inner membrane. This is Protease HtpX from Stenotrophomonas maltophilia (strain R551-3).